Here is a 299-residue protein sequence, read N- to C-terminus: Putative hydrolase YtaP (299 aa).

Belongs to the dienelactone hydrolase family.

This is Putative hydrolase YtaP (ytaP) from Bacillus subtilis (strain 168).